Reading from the N-terminus, the 442-residue chain is Alpha-1,6-mannosyl-glycoprotein 2-beta-N-acetylglucosaminyltransferase (442 aa).

Residues 1 to 9 lie on the Cytoplasmic side of the membrane; sequence MRFRIYKRK. Residues 10 to 29 form a helical; Signal-anchor for type II membrane protein membrane-spanning segment; it reads VLILTLVVAACGFVLWSSNG. The Lumenal segment spans residues 30–442; sequence RQRKSDALGP…ELCKSYRRLQ (413 aa). 2 N-linked (GlcNAc...) asparagine glycosylation sites follow: Asn64 and Asn81. Substrate-binding positions include 118 to 122 and Asp149; that span reads QVHNR. The cysteines at positions 191 and 205 are disulfide-linked. Substrate is bound at residue 224 to 228; that stretch reads QTKHH. Asp256 contacts Mn(2+). Cys278 and Cys281 form a disulfide bridge. Arg293 is a substrate binding site. 3 disulfides stabilise this stretch: Cys329–Cys352, Cys334–Cys435, and Cys373–Cys381. His369 contributes to the Mn(2+) binding site.

The protein belongs to the glycosyltransferase 16 (GT16) protein family. As to quaternary structure, homodimer. The cofactor is Mn(2+). As to expression, detected in liver, lung, testis, kidney, brain, spleen, thymus, uterus and intestine.

The protein resides in the golgi apparatus membrane. The enzyme catalyses an N(4)-{beta-D-GlcNAc-(1-&gt;2)-alpha-D-Man-(1-&gt;3)-[alpha-D-Man-(1-&gt;6)]-beta-D-Man-(1-&gt;4)-beta-D-GlcNAc-(1-&gt;4)-beta-D-GlcNAc}-L-asparaginyl-[protein] + UDP-N-acetyl-alpha-D-glucosamine = N(4)-{beta-D-GlcNAc-(1-&gt;2)-alpha-D-Man-(1-&gt;3)-[beta-D-GlcNAc-(1-&gt;2)-alpha-D-Man-(1-&gt;6)]-beta-D-Man-(1-&gt;4)-beta-D-GlcNAc-(1-&gt;4)-beta-D-GlcNAc}-L-asparaginyl-[protein] + UDP + H(+). Its pathway is protein modification; protein glycosylation. Functionally, plays an essential role in protein N-glycosylation. Catalyzes the transfer of N-acetylglucosamine (GlcNAc) onto the free terminal mannose moiety in the core structure of the nascent N-linked glycan chain, giving rise to the second branch in complex glycans. The protein is Alpha-1,6-mannosyl-glycoprotein 2-beta-N-acetylglucosaminyltransferase (Mgat2) of Mus musculus (Mouse).